Reading from the N-terminus, the 528-residue chain is GMP synthase [glutamine-hydrolyzing] (528 aa).

One can recognise a Glutamine amidotransferase type-1 domain in the interval 13 to 204 (AIVILDFGSQ…VYHVCGCDPD (192 aa)). The Nucleophile role is filled by Cys-90. Active-site residues include His-178 and Glu-180. Residues 205–403 (WTTAAFIDEA…LGLPEEIVRR (199 aa)) enclose the GMPS ATP-PPase domain. An ATP-binding site is contributed by 232 to 238 (SGGVDSS).

As to quaternary structure, homodimer.

It carries out the reaction XMP + L-glutamine + ATP + H2O = GMP + L-glutamate + AMP + diphosphate + 2 H(+). The protein operates within purine metabolism; GMP biosynthesis; GMP from XMP (L-Gln route): step 1/1. In terms of biological role, catalyzes the synthesis of GMP from XMP. This Synechococcus sp. (strain CC9605) protein is GMP synthase [glutamine-hydrolyzing].